The following is a 233-amino-acid chain: Small ribosomal subunit protein uS2 (233 aa).

The protein belongs to the universal ribosomal protein uS2 family.

The chain is Small ribosomal subunit protein uS2 from Clostridium botulinum (strain Eklund 17B / Type B).